A 91-amino-acid polypeptide reads, in one-letter code: Small ribosomal subunit protein bS16 (91 aa).

Belongs to the bacterial ribosomal protein bS16 family.

The chain is Small ribosomal subunit protein bS16 from Enterococcus faecalis (strain ATCC 700802 / V583).